A 302-amino-acid chain; its full sequence is Heme A synthase (302 aa).

Residues 1-6 are Cytoplasmic-facing; sequence MNKALK. Residues 7 to 27 form a helical membrane-spanning segment; sequence GLGIITTIAMLFVLIGGALVT. Residues 28 to 61 are Extracellular-facing; that stretch reads KTGSGMGCGRSWPLCNGSIFPALTLESIIEWSHR. A disulfide bond links C35 and C42. E57 is a catalytic residue. H60 contributes to the heme o binding site. A helical transmembrane segment spans residues 62-82; sequence FVSGTSGVLVLALAIWTWKKI. Residues 83–91 lie on the Cytoplasmic side of the membrane; the sequence is GHIRETKFL. Residues 92–112 form a helical membrane-spanning segment; it reads AVMSVVFLILQALLGAAAVVF. Over 113 to 120 the chain is Extracellular; the sequence is GSSALIMA. A helical transmembrane segment spans residues 121-141; sequence LHFGISLISFASVLLLTLLVF. H122 is a heme o binding site. Residues 142–158 lie on the Cytoplasmic side of the membrane; the sequence is EADSKQKSESFYIGKTM. Residues 159 to 179 form a helical membrane-spanning segment; sequence QFHMIGIIIYTYVVVYTGAYV. At 180–208 the chain is on the extracellular side; sequence RHTSSSLACLDFPMCSTENGWLPGKFHEW. A disulfide bridge connects residues C188 and C194. Residues 209 to 229 form a helical membrane-spanning segment; it reads VQMGHRAAALLLFAWIIAAAV. H213 contacts heme b. Over 230-242 the chain is Cytoplasmic; the sequence is HAARQYKNQKRIY. The helical transmembrane segment at 243–263 threads the bilayer; sequence WGWMISLILIILQAASGIAVV. The Extracellular segment spans residues 264 to 272; sequence YSRLDLGFA. A helical transmembrane segment spans residues 273-293; the sequence is LAHAFFISCLFGILCYFLLLV. Position 275 (H275) interacts with heme b. Residues 294–302 are Cytoplasmic-facing; that stretch reads ARYRRQVQK.

Belongs to the COX15/CtaA family. Type 1 subfamily. As to quaternary structure, interacts with CtaB. Heme b serves as cofactor.

Its subcellular location is the cell membrane. The catalysed reaction is Fe(II)-heme o + 2 A + H2O = Fe(II)-heme a + 2 AH2. Its pathway is porphyrin-containing compound metabolism; heme A biosynthesis; heme A from heme O: step 1/1. In terms of biological role, catalyzes the conversion of heme O to heme A by two successive hydroxylations of the methyl group at C8. The first hydroxylation forms heme I, the second hydroxylation results in an unstable dihydroxymethyl group, which spontaneously dehydrates, resulting in the formyl group of heme A. The protein is Heme A synthase of Bacillus licheniformis (strain ATCC 14580 / DSM 13 / JCM 2505 / CCUG 7422 / NBRC 12200 / NCIMB 9375 / NCTC 10341 / NRRL NRS-1264 / Gibson 46).